The following is a 347-amino-acid chain: MSVMFDPDTAIYPFPPKPTPLSIDEKAYYREKIKRLLKERNAVMVAHYYTDPEIQQLAEETGGCISDSLEMARFGAKHPASTLLVAGVRFMGETAKILSPEKTILMPTLQAECSLDLGCPVEEFNAFCDAHPDRTVVVYANTSAAVKARADWVVTSSIAVELIDHLDSLGEKIIWAPDKHLGRYVQKQTGGDILCWQGACIVHDEFKTQALTRLQEEYPDAAILVHPESPQAIVDMADAVGSTSQLIAAAKTLPHQRLIVATDRGIFYKMQQAVPDKELLEAPTAGEGATCRSCAHCPWMAMNGLQAIAKALEQEGSNHEVHVEERLRERALVPLNRMLDFAATLRG.

Residues His-47 and Ser-68 each contribute to the iminosuccinate site. Position 113 (Cys-113) interacts with [4Fe-4S] cluster. Residues 139-141 (YAN) and Ser-156 each bind iminosuccinate. Cys-200 lines the [4Fe-4S] cluster pocket. Residues 226-228 (HPE) and Thr-243 each bind iminosuccinate. Cys-297 lines the [4Fe-4S] cluster pocket.

The protein belongs to the quinolinate synthase family. Type 1 subfamily. Requires [4Fe-4S] cluster as cofactor.

It localises to the cytoplasm. The catalysed reaction is iminosuccinate + dihydroxyacetone phosphate = quinolinate + phosphate + 2 H2O + H(+). It participates in cofactor biosynthesis; NAD(+) biosynthesis; quinolinate from iminoaspartate: step 1/1. Catalyzes the condensation of iminoaspartate with dihydroxyacetone phosphate to form quinolinate. This Escherichia coli O9:H4 (strain HS) protein is Quinolinate synthase.